Here is a 711-residue protein sequence, read N- to C-terminus: Interferon-induced GTP-binding protein Mx2 (711 aa).

One can recognise a Dynamin-type G domain in the interval 115 to 387; sequence DLALPAIAVI…LILHINKSLP (273 aa). The tract at residues 125–132 is G1 motif; that stretch reads GDQSSGKS. 125 to 132 is a GTP binding site; it reads GDQSSGKS. The segment at 150 to 152 is G2 motif; that stretch reads VTR. The interval 225 to 228 is G3 motif; that stretch reads DLPG. GTP contacts are provided by residues 225 to 229 and 294 to 297; these read DLPGI and TKPD. Residues 294 to 297 are G4 motif; that stretch reads TKPD. A G5 motif region spans residues 326–329; it reads RCRG. The GED domain occupies 623–711; the sequence is NDEIGVHLNA…ARRALYMFFS (89 aa).

The protein belongs to the TRAFAC class dynamin-like GTPase superfamily. Dynamin/Fzo/YdjA family.

It localises to the cytoplasm. It is found in the nucleus. Interferon-induced dynamin-like GTPase with antiviral activity against vesicular stomatitis virus (VSV). This chain is Interferon-induced GTP-binding protein Mx2 (MX2), found in Canis lupus familiaris (Dog).